A 108-amino-acid polypeptide reads, in one-letter code: Large ribosomal subunit protein bL21 (108 aa).

It belongs to the bacterial ribosomal protein bL21 family. Part of the 50S ribosomal subunit. Contacts protein L20.

This protein binds to 23S rRNA in the presence of protein L20. This Orientia tsutsugamushi (strain Ikeda) (Rickettsia tsutsugamushi) protein is Large ribosomal subunit protein bL21.